Reading from the N-terminus, the 722-residue chain is Pesticidal crystal protein Cry22Aa (722 aa).

Its function is as follows. Promotes colloidosmotic lysis by binding to the midgut epithelial cells of hymenopteran species. This Bacillus thuringiensis protein is Pesticidal crystal protein Cry22Aa (cry22Aa).